The chain runs to 109 residues: Thiosulfate sulfurtransferase GlpE (109 aa).

Residues 17–105 (KEGKTALVDI…WARSYPQDIT (89 aa)) form the Rhodanese domain. C65 acts as the Cysteine persulfide intermediate in catalysis.

It belongs to the GlpE family.

It localises to the cytoplasm. It carries out the reaction thiosulfate + hydrogen cyanide = thiocyanate + sulfite + 2 H(+). The catalysed reaction is thiosulfate + [thioredoxin]-dithiol = [thioredoxin]-disulfide + hydrogen sulfide + sulfite + 2 H(+). Transferase that catalyzes the transfer of sulfur from thiosulfate to thiophilic acceptors such as cyanide or dithiols. May function in a CysM-independent thiosulfate assimilation pathway by catalyzing the conversion of thiosulfate to sulfite, which can then be used for L-cysteine biosynthesis. This is Thiosulfate sulfurtransferase GlpE from Yersinia pestis bv. Antiqua (strain Antiqua).